The following is a 112-amino-acid chain: Integration host factor subunit alpha (112 aa).

The protein belongs to the bacterial histone-like protein family. As to quaternary structure, heterodimer of an alpha and a beta chain.

Functionally, this protein is one of the two subunits of integration host factor, a specific DNA-binding protein that functions in genetic recombination as well as in transcriptional and translational control. The protein is Integration host factor subunit alpha of Rhizobium etli (strain CIAT 652).